The primary structure comprises 201 residues: FMN reductase (NADH) RutF (201 aa).

A disordered region spans residues 169–201 (APRSGAAPAEPARAARALGARPAEGPALALRSA).

Belongs to the non-flavoprotein flavin reductase family. RutF subfamily.

It carries out the reaction FMNH2 + NAD(+) = FMN + NADH + 2 H(+). Functionally, catalyzes the reduction of FMN to FMNH2 which is used to reduce pyrimidine by RutA via the Rut pathway. The protein is FMN reductase (NADH) RutF of Methylorubrum extorquens (strain ATCC 14718 / DSM 1338 / JCM 2805 / NCIMB 9133 / AM1) (Methylobacterium extorquens).